The primary structure comprises 340 residues: MTQINAQLAHEPRHDWTLPQVEALFDLPFMELMFQAATVHRAWFDPSELQLSQLLSVKTGGCAENCGYCSQSAHFKTGLKAEKLMDAEVVIAKAREARDGGAQRFCMGAAWRELKDRDLPKLAAMIGGVKALGLETCATLGMLTAEQAKQLKDAGLDYYNHNLDTGPEYYGDVVSTRTYQERLDTLAYVRDAGMSTCCGGIVGMGETRRDRASLLHQLATLPSHPDSLPVNALVPVAGTPLGDKVKREGEIDGLEFVRTVAVARIVCPKSMVRLSAGRDDMSRELQALCFMAGANSIFVGGKLLTTPLPNMDDDSKLFLDLNMRPMGSAKIVAPESVAAE.

Residues 47–269 (SELQLSQLLS…VAVARIVCPK (223 aa)) enclose the Radical SAM core domain. Residues C62, C66, and C69 each contribute to the [4Fe-4S] cluster site. Residues C106, C137, C197, and R273 each coordinate [2Fe-2S] cluster.

This sequence belongs to the radical SAM superfamily. Biotin synthase family. Homodimer. The cofactor is [4Fe-4S] cluster. It depends on [2Fe-2S] cluster as a cofactor.

It catalyses the reaction (4R,5S)-dethiobiotin + (sulfur carrier)-SH + 2 reduced [2Fe-2S]-[ferredoxin] + 2 S-adenosyl-L-methionine = (sulfur carrier)-H + biotin + 2 5'-deoxyadenosine + 2 L-methionine + 2 oxidized [2Fe-2S]-[ferredoxin]. The protein operates within cofactor biosynthesis; biotin biosynthesis; biotin from 7,8-diaminononanoate: step 2/2. Functionally, catalyzes the conversion of dethiobiotin (DTB) to biotin by the insertion of a sulfur atom into dethiobiotin via a radical-based mechanism. This Caulobacter sp. (strain K31) protein is Biotin synthase.